Here is a 550-residue protein sequence, read N- to C-terminus: Hydroxylamine reductase (550 aa).

Residues cysteine 3, cysteine 6, cysteine 18, and cysteine 25 each contribute to the [2Fe-2S] cluster site. The hybrid [4Fe-2O-2S] cluster site is built by histidine 249, glutamate 273, cysteine 317, cysteine 405, cysteine 433, cysteine 458, glutamate 492, and lysine 494. Position 405 is a cysteine persulfide (cysteine 405).

Belongs to the HCP family. It depends on [2Fe-2S] cluster as a cofactor. Requires hybrid [4Fe-2O-2S] cluster as cofactor.

It is found in the cytoplasm. It carries out the reaction A + NH4(+) + H2O = hydroxylamine + AH2 + H(+). In terms of biological role, catalyzes the reduction of hydroxylamine to form NH(3) and H(2)O. The chain is Hydroxylamine reductase from Escherichia coli O6:H1 (strain CFT073 / ATCC 700928 / UPEC).